Consider the following 521-residue polypeptide: Apolipoprotein N-acyltransferase (521 aa).

A run of 5 helical transmembrane segments spans residues 24–44 (IKET…FIAL), 71–91 (WLGF…IGYI), 128–148 (IGFL…FNNL), 151–171 (IADI…NSGI), and 182–202 (NLLN…YGMI). The CN hydrolase domain maps to 218–472 (LNIAAIQLNT…KGYLLSTVKL (255 aa)). Catalysis depends on Glu-263, which acts as the Proton acceptor. Lys-331 is an active-site residue. Cys-383 acts as the Nucleophile in catalysis.

Belongs to the CN hydrolase family. Apolipoprotein N-acyltransferase subfamily.

Its subcellular location is the cell inner membrane. It catalyses the reaction N-terminal S-1,2-diacyl-sn-glyceryl-L-cysteinyl-[lipoprotein] + a glycerophospholipid = N-acyl-S-1,2-diacyl-sn-glyceryl-L-cysteinyl-[lipoprotein] + a 2-acyl-sn-glycero-3-phospholipid + H(+). It functions in the pathway protein modification; lipoprotein biosynthesis (N-acyl transfer). In terms of biological role, catalyzes the phospholipid dependent N-acylation of the N-terminal cysteine of apolipoprotein, the last step in lipoprotein maturation. The sequence is that of Apolipoprotein N-acyltransferase from Borreliella burgdorferi (strain ATCC 35210 / DSM 4680 / CIP 102532 / B31) (Borrelia burgdorferi).